A 289-amino-acid polypeptide reads, in one-letter code: Heme oxygenase 1 (289 aa).

Residues 1 to 12 are compositionally biased toward polar residues; that stretch reads MERPQPDSSMPQ. A disordered region spans residues 1 to 24; it reads MERPQPDSSMPQDLSEALKEATKE. The Cytoplasmic portion of the chain corresponds to 1–266; that stretch reads MERPQPDSSM…KPQPSVLSQA (266 aa). Heme b-binding residues include K19, H26, Y135, and R184. The disordered stretch occupies residues 239-261; the sequence is RRAGSKVQDLAPTKASRGKPQPS. S243 is modified (phosphoserine). The helical; Anchor for type IV membrane protein transmembrane segment at 267–289 threads the bilayer; it reads PLLRWVLTLSFLVATVAVGLYAM.

The protein belongs to the heme oxygenase family. As to quaternary structure, homodimer and higher order homooligomer. Oligomerization is crucial for its stability and function in the endoplasmic reticulum. Interacts with FLVCR2; this interaction is potentiated in the presence of heme. In terms of processing, a soluble form arises by proteolytic removal of the membrane anchor.

Its subcellular location is the endoplasmic reticulum membrane. The catalysed reaction is heme b + 3 reduced [NADPH--hemoprotein reductase] + 3 O2 = biliverdin IXalpha + CO + Fe(2+) + 3 oxidized [NADPH--hemoprotein reductase] + 3 H2O + H(+). Its activity is regulated as follows. Inhibited by metalloporphyrins such as Sn-, Co-, Mn- and Zn-protoporphyrins. Catalyzes the oxidative cleavage of heme at the alpha-methene bridge carbon, released as carbon monoxide (CO), to generate biliverdin IXalpha, while releasing the central heme iron chelate as ferrous iron. Affords protection against programmed cell death and this cytoprotective effect relies on its ability to catabolize free heme and prevent it from sensitizing cells to undergo apoptosis. Its function is as follows. Catalyzes the oxidative cleavage of heme at the alpha-methene bridge carbon, released as carbon monoxide (CO), to generate biliverdin IXalpha, while releasing the central heme iron chelate as ferrous iron. The chain is Heme oxygenase 1 (HMOX1) from Bos taurus (Bovine).